Consider the following 494-residue polypeptide: GTPase Der (494 aa).

2 EngA-type G domains span residues 3–166 (PVVA…AEQM) and 206–379 (IKLA…RSAT). Residues 9–16 (GRPNVGKS), 56–60 (DTGGI), 118–121 (NKVD), 212–219 (GRPNVGKS), 259–263 (DTAGV), and 324–327 (NKWD) each bind GTP. The region spanning 380–464 (TRVGTSVLTR…PIRIQFQNSE (85 aa)) is the KH-like domain.

This sequence belongs to the TRAFAC class TrmE-Era-EngA-EngB-Septin-like GTPase superfamily. EngA (Der) GTPase family. Associates with the 50S ribosomal subunit.

Functionally, GTPase that plays an essential role in the late steps of ribosome biogenesis. This Vibrio cholerae serotype O1 (strain ATCC 39541 / Classical Ogawa 395 / O395) protein is GTPase Der.